We begin with the raw amino-acid sequence, 837 residues long: Protein translocase subunit SecA 1 (837 aa).

ATP-binding positions include glutamine 85, 103–107 (GEGKT), and aspartate 493. Zn(2+) contacts are provided by cysteine 821, cysteine 823, cysteine 832, and histidine 833.

It belongs to the SecA family. In terms of assembly, monomer and homodimer. Part of the essential Sec protein translocation apparatus which comprises SecA, SecYEG and auxiliary proteins SecDF. Other proteins may also be involved. Zn(2+) is required as a cofactor.

The protein localises to the cell membrane. It is found in the cytoplasm. The enzyme catalyses ATP + H2O + cellular proteinSide 1 = ADP + phosphate + cellular proteinSide 2.. Part of the Sec protein translocase complex. Interacts with the SecYEG preprotein conducting channel. Has a central role in coupling the hydrolysis of ATP to the transfer of proteins into and across the cell membrane, serving as an ATP-driven molecular motor driving the stepwise translocation of polypeptide chains across the membrane. This Streptococcus pneumoniae serotype 4 (strain ATCC BAA-334 / TIGR4) protein is Protein translocase subunit SecA 1.